The chain runs to 373 residues: MPSSMSGYIPSYLDKDELCVVCGDKATGYHYRCITCEGCKGFFRRTIQKNLHPSYSCKYEGKCVIDKVTRNQCQECRFKKCIAVGMATDLVLDDNKRLAKRKLIEENREKRRKDEIQKSLVQKPEPTQEEWELIQVVTEAHVATNAQGSHWKQKRKFLPEDIGQAPIVNAPEGGKVDLEAFSQFTKIITPAITRVVDFAKKLPMFCELPCEDQIILLKGCCMEIMSLRAAVRYDPESETLTLNGEMAVTRGQLKNGGLGVVSDAIFDLGVSLSSFSLDDTEVALLQAVLLMSSDRPGLASVERIEKCQEGFLLAFEHYINYRKHNIAHFWPKLLMKVTDLRMIGACHASRFLHMKVECPTELFPPLFLEVFED.

The interval 1 to 18 (MPSSMSGYIPSYLDKDEL) is modulating. NR C4-type zinc fingers lie at residues 19-39 (CVVC…CEGC) and 57-81 (CKYE…FKKC). The segment at residues 19 to 93 (CVVCGDKATG…VGMATDLVLD (75 aa)) is a DNA-binding region (nuclear receptor). An NR LBD domain is found at 129 to 373 (EEWELIQVVT…PPLFLEVFED (245 aa)).

This sequence belongs to the nuclear hormone receptor family. NR1 subfamily.

The protein localises to the nucleus. Its function is as follows. High affinity receptor for triiodothyronine (T3). The protein is Thyroid hormone receptor beta-A (thrb-a) of Xenopus laevis (African clawed frog).